A 152-amino-acid polypeptide reads, in one-letter code: uncharacterized protein (152 aa).

This is an uncharacterized protein from Rickettsia prowazekii (strain Madrid E).